Reading from the N-terminus, the 266-residue chain is ATP synthase subunit a (266 aa).

Transmembrane regions (helical) follow at residues 41-61 (IDTLIMSFGLGALFCYVFWLA), 98-118 (VIAPLALTIFCWVFLSNLMDL), 119-139 (VPIDMVPSIMMAVGVDYWKIL), 152-172 (LSVLALIIIYGVMGQGVGGWL), 178-198 (HPLGPWLAPANLILNIVEFIA), 216-236 (LVFILISLLPWWIQWALGTPW), and 237-257 (AIFHILVVPLQAFIFMMLTVV).

This sequence belongs to the ATPase A chain family. F-type ATPases have 2 components, CF(1) - the catalytic core - and CF(0) - the membrane proton channel. CF(1) has five subunits: alpha(3), beta(3), gamma(1), delta(1), epsilon(1). CF(0) has three main subunits: a(1), b(2) and c(9-12). The alpha and beta chains form an alternating ring which encloses part of the gamma chain. CF(1) is attached to CF(0) by a central stalk formed by the gamma and epsilon chains, while a peripheral stalk is formed by the delta and b chains.

It localises to the cell inner membrane. Key component of the proton channel; it plays a direct role in the translocation of protons across the membrane. The sequence is that of ATP synthase subunit a from Halorhodospira halophila (strain DSM 244 / SL1) (Ectothiorhodospira halophila (strain DSM 244 / SL1)).